A 371-amino-acid polypeptide reads, in one-letter code: Glycerate kinase (371 aa).

This sequence belongs to the glycerate kinase type-1 family.

It carries out the reaction (R)-glycerate + ATP = (2R)-3-phosphoglycerate + ADP + H(+). The protein is Glycerate kinase (glxK) of Neisseria meningitidis serogroup B (strain ATCC BAA-335 / MC58).